The primary structure comprises 170 residues: Adenine phosphoribosyltransferase (170 aa).

It belongs to the purine/pyrimidine phosphoribosyltransferase family. Homodimer.

It is found in the cytoplasm. The catalysed reaction is AMP + diphosphate = 5-phospho-alpha-D-ribose 1-diphosphate + adenine. The protein operates within purine metabolism; AMP biosynthesis via salvage pathway; AMP from adenine: step 1/1. In terms of biological role, catalyzes a salvage reaction resulting in the formation of AMP, that is energically less costly than de novo synthesis. The polypeptide is Adenine phosphoribosyltransferase (Kosmotoga olearia (strain ATCC BAA-1733 / DSM 21960 / TBF 19.5.1)).